A 317-amino-acid polypeptide reads, in one-letter code: Melanocyte-stimulating hormone receptor (317 aa).

At 1 to 37 (MPMQEPQRRLLGPFNSTRTGAPHLELSANQTGPWCLH) the chain is on the extracellular side. 2 N-linked (GlcNAc...) asparagine glycosylation sites follow: Asn15 and Asn29. The helical transmembrane segment at 38-63 (VSIPDGLFLSLGLVSLVENVLVVISI) threads the bilayer. Over 64-72 (AKNQNLHSP) the chain is Cytoplasmic. Residues 73–93 (MYYFICCLALSDLLVSVSIVL) form a helical membrane-spanning segment. The Extracellular segment spans residues 94–118 (ETTLILVLEAGALATRVTVVQQLDN). A helical transmembrane segment spans residues 119 to 140 (VIDVLICASMVSSLCFLGAIAV). Residues 141 to 163 (DRYISIFYALRYHSIVTLPRARW) are Cytoplasmic-facing. Residues 164-183 (AIVAIWVASISSSTLFVAYY) form a helical membrane-spanning segment. Residues 184–191 (NHTAVLLC) lie on the Extracellular side of the membrane. A helical membrane pass occupies residues 192–211 (LVTFFLATLALMVVLYVHML). At 212–240 (ARAHQHAQAIAQLHKRQHLVHQGFRLKGA) the chain is on the cytoplasmic side. The chain crosses the membrane as a helical span at residues 241 to 266 (ATLTILLGIFFLCWGPFFLYLTLIVL). The Extracellular segment spans residues 267 to 279 (CPKHPTCGCFFKN). Residues 280–300 (LNLFLALIIFNSIVDPLIYAF) form a helical membrane-spanning segment. Residues 301–317 (RSQELRMTLKEVLLCSW) lie on the Cytoplasmic side of the membrane. Cys315 is lipidated: S-palmitoyl cysteine.

Belongs to the G-protein coupled receptor 1 family. As to quaternary structure, interacts with MGRN1, but does not undergo MGRN1-mediated ubiquitination; this interaction competes with GNAS-binding and thus inhibits agonist-induced cAMP production. Interacts with OPN3; the interaction results in a decrease in MC1R-mediated cAMP signaling and ultimately a decrease in melanin production in melanocytes.

Its subcellular location is the cell membrane. In terms of biological role, receptor for MSH (alpha, beta and gamma) and ACTH. The activity of this receptor is mediated by G proteins which activate adenylate cyclase. Mediates melanogenesis, the production of eumelanin (black/brown) and phaeomelanin (red/yellow), via regulation of cAMP signaling in melanocytes. The sequence is that of Melanocyte-stimulating hormone receptor (MC1R) from Chaetodipus penicillatus (Desert pocket mouse).